The sequence spans 170 residues: Penton capsid protein P1 (170 aa).

The interval 1-25 is disordered; that stretch reads MVETTQHFVSIESSNRPDPANTTPA. Residues N21, N93, N129, and N137 are each glycosylated (N-linked (Glc...) asparagine; by host).

In terms of processing, glycosylated. The pattern of glycosylation sites are unusual.

It localises to the virion. Constitutes the 12 pentameric capsomers positioned at the 5-fold vertices of the outer capsid shell. One of the vertex is composed of a variant of P1 (type II pentameric capsomer) and has thereby a structure slightly different from the other verteces (type I pentameric capsomers). The chain is Penton capsid protein P1 from Paramecium bursaria Chlorella virus 1 (PBCV-1).